The chain runs to 135 residues: Large ribosomal subunit protein mL54 (135 aa).

Residues 1–14 (MAAAHLLRASRVWA) constitute a mitochondrion transit peptide.

It belongs to the mitochondrion-specific ribosomal protein mL54 family. Component of the mitochondrial ribosome large subunit (39S) which comprises a 16S rRNA and about 50 distinct proteins.

Its subcellular location is the mitochondrion. The sequence is that of Large ribosomal subunit protein mL54 (Mrpl54) from Mus musculus (Mouse).